Reading from the N-terminus, the 614-residue chain is MASRVSDTGNGNENKENEGTVASDHSEARCSYILFEAECSDGGDDEESMEDSLVEDLVDDASVHQGNSLSLFHAQTVEEYEGEIQSLKRKFILSPLHRDVAELSPRLAGVSLEENRGKKARKSLFHDDSGIDSSAVEVSQLSSTPSAPGPDIRLPKPSDIDLEPLFQSRQRCTHMYSKFKAVYGVSFTDITRPFKSDKTTSQHWVVAAYYLAFDSEISAMEVLLRQQCQFLYIDNNDGIILFFLEYNVQKSRTTVYNWFTANFHYNENRMLANPPRTRNMPAALFFYHRFMGTGGIKHGAMPEIIVNQCVVSNQQTDTFELSRMVQWALDNDLQDEHMLALEYALLAESDGNARAFLKQNNQPMIVKNCSIMVRHYKTALVAKMSISQYVNKRCLDHGEADENSWRGIVHFLRYQGQEFLPFMCKMHNFLHHRPKKSTLVLCGPSDTGKSYFANGLNKFLDGHVLSFVSNGSHFWLSPLRGARCCLIDDATLTFWRYADQNMRALLDGYEISIDAKHRNPMQTRAPPLIITTNEDIMRLDEFKYLQTRTMYVYFNKPFPLKGNGQPLYYIDGYTWNSFFRKFWRHLNLKDPEDESDGETPGTIRLYTRADTDTI.

The interval 1–25 (MASRVSDTGNGNENKENEGTVASDH) is disordered. The span at 13–25 (ENKENEGTVASDH) shows a compositional bias: basic and acidic residues. The short motif at 88-90 (KRK) is the Nuclear localization signal element. Phosphoserine; by host is present on residues S94 and S104. Residues 103–112 (LSPRLAGVSL) carry the Nuclear export signal motif. The span at 136–146 (VEVSQLSSTPS) shows a compositional bias: polar residues. Residues 136–156 (VEVSQLSSTPSAPGPDIRLPK) are disordered. Positions 154-316 (LPKPSDIDLE…NQCVVSNQQT (163 aa)) are DNA-binding region. An SF3 helicase domain is found at 403–567 (NSWRGIVHFL…FPLKGNGQPL (165 aa)). 443–450 (GPSDTGKS) provides a ligand contact to ATP.

This sequence belongs to the papillomaviridae E1 protein family. As to quaternary structure, can form hexamers. Interacts with E2 protein; this interaction increases E1 DNA binding specificity. Interacts with host DNA polymerase subunit POLA2. Interacts with host single stranded DNA-binding protein RPA1. Interacts with host TOP1; this interaction stimulates the enzymatic activity of TOP1. In terms of processing, phosphorylated.

It localises to the host nucleus. The enzyme catalyses Couples ATP hydrolysis with the unwinding of duplex DNA by translocating in the 3'-5' direction.. It catalyses the reaction ATP + H2O = ADP + phosphate + H(+). Its function is as follows. ATP-dependent DNA 3'-5' helicase required for initiation of viral DNA replication. It forms a complex with the viral E2 protein. The E1-E2 complex binds to the replication origin which contains binding sites for both proteins. During the initial step, a dimer of E1 interacts with a dimer of protein E2 leading to a complex that binds the viral origin of replication with high specificity. Then, a second dimer of E1 displaces the E2 dimer in an ATP-dependent manner to form the E1 tetramer. Following this, two E1 monomers are added to each half of the site, which results in the formation of two E1 trimers on the viral ori. Subsequently, two hexamers will be created. The double hexamer acts as a bi-directional helicase machinery and unwinds the viral DNA and then recruits the host DNA polymerase to start replication. This chain is Replication protein E1, found in Homo sapiens (Human).